Consider the following 1768-residue polypeptide: Maestro heat-like repeat-containing protein family member 1 homolog (1768 aa).

HEAT repeat units lie at residues 4–47 (TSQV…HQPN), 164–203 (VHNP…AICS), 816–856 (QRLQ…AVHP), 1166–1204 (QSQM…ARGA), 1483–1521 (EQLL…CSST), and 1731–1768 (TISR…HDFH).

Belongs to the MROH1 family. In terms of assembly, homooligomer; homooligomerizes at lysosome scission sites.

It localises to the lysosome membrane. Lysosome fission factor. Recruited to lysosomes by rab-7 at scission sites and homooligomerizes to mediate the constriction and scission of lysosomal tubules. May sever membranes by inserting amphipathic helices into one bilayer leaflet. Lysosome fission is required to maintain their steady-state number, shape, size, composition and function, and to accomplish regeneration. In Caenorhabditis elegans, this protein is Maestro heat-like repeat-containing protein family member 1 homolog.